Reading from the N-terminus, the 518-residue chain is Glutamate--cysteine ligase (518 aa).

This sequence belongs to the glutamate--cysteine ligase type 1 family. Type 1 subfamily.

The catalysed reaction is L-cysteine + L-glutamate + ATP = gamma-L-glutamyl-L-cysteine + ADP + phosphate + H(+). It functions in the pathway sulfur metabolism; glutathione biosynthesis; glutathione from L-cysteine and L-glutamate: step 1/2. In Citrobacter koseri (strain ATCC BAA-895 / CDC 4225-83 / SGSC4696), this protein is Glutamate--cysteine ligase.